We begin with the raw amino-acid sequence, 307 residues long: Acetaldehyde dehydrogenase (307 aa).

Residue 12–15 (SGNI) participates in NAD(+) binding. Cys-127 (acyl-thioester intermediate) is an active-site residue. NAD(+) contacts are provided by residues 158-166 (SAGPGTRQN) and Asn-278.

The protein belongs to the acetaldehyde dehydrogenase family. In terms of assembly, monomer. Can also form a heterotetramer composed of two aldolase (TTHB246) and two dehydrogenase (TTHB247) subunits. Upon complex formation, the aldolase shows a 5-fold increase in substrate affinity, while the dehydrogenase shows a 3-fold decrease; the kcat values of each enzyme are reduced by 2-fold when they are in a complex.

The catalysed reaction is acetaldehyde + NAD(+) + CoA = acetyl-CoA + NADH + H(+). It carries out the reaction propanal + NAD(+) + CoA = propanoyl-CoA + NADH + H(+). Functionally, catalyzes the conversion of acetaldehyde or propanal to acetyl-CoA or propanoyl-CoA, respectively, using NAD(+) and coenzyme A. The aldehyde substrates can be directly channeled from the aldolase TTHB246 to the dehydrogenase TTHB247. Is the final enzyme in the meta-cleavage pathway for the degradation of aromatic compounds. This chain is Acetaldehyde dehydrogenase, found in Thermus thermophilus (strain ATCC 27634 / DSM 579 / HB8).